Here is a 75-residue protein sequence, read N- to C-terminus: Translational regulator CsrA (75 aa).

The protein belongs to the CsrA/RsmA family. Homodimer; the beta-strands of each monomer intercalate to form a hydrophobic core, while the alpha-helices form wings that extend away from the core.

Its subcellular location is the cytoplasm. In terms of biological role, a translational regulator that binds mRNA to regulate translation initiation and/or mRNA stability. Usually binds in the 5'-UTR at or near the Shine-Dalgarno sequence preventing ribosome-binding, thus repressing translation. Its main target seems to be the major flagellin gene, while its function is anatagonized by FliW. The protein is Translational regulator CsrA of Treponema denticola (strain ATCC 35405 / DSM 14222 / CIP 103919 / JCM 8153 / KCTC 15104).